The following is a 225-amino-acid chain: Insulin-induced gene 2 protein (225 aa).

Topologically, residues 1–28 are cytoplasmic; sequence MAEGETESPRPKKCGPYISSVTSQSVNV. The helical transmembrane segment at 29-51 threads the bilayer; it reads VIRGVVLFFIGVFLALVLNLLQI. The Lumenal segment spans residues 52–70; that stretch reads QRNVTLFPPDVITSIFSSA. The helical transmembrane segment at 71 to 88 threads the bilayer; it reads WWVPPCCGTASAVIGLLY. The Cytoplasmic portion of the chain corresponds to 89 to 103; it reads PCIDRHLGEPHKFKR. The helical transmembrane segment at 104–126 threads the bilayer; it reads EWSSVMRCVAVFVGINHASAKVD. The Lumenal portion of the chain corresponds to 127-129; it reads FDN. The chain crosses the membrane as a helical span at residues 130-148; sequence NFQFSLTLAALSVGLWWTF. Topologically, residues 149–153 are cytoplasmic; the sequence is DRSRS. At Ser151 the chain carries Phosphoserine. Residues 154–175 traverse the membrane as a helical segment; it reads GFGLGVGIAFLATVVTQLLVYN. Over 176 to 189 the chain is Lumenal; that stretch reads GVYQYTSPDFLYVR. A helical transmembrane segment spans residues 190-207; that stretch reads SWLPCIFFAGGITMGNIG. Over 208 to 225 the chain is Cytoplasmic; the sequence is RQLAMYECKVIAEKSHQE. Cysteine sulfenic acid (-SOH); alternate is present on Cys215. A Glycyl cysteine thioester (Cys-Gly) (interchain with G-Cter in ubiquitin); alternate cross-link involves residue Cys215. The short motif at 219–225 is the KxHxx element; the sequence is AEKSHQE.

It belongs to the INSIG family. As to quaternary structure, interacts with SCAP; interaction is direct and only takes place in the presence of sterols; it prevents interaction between SCAP and the coat protein complex II (COPII). Associates with the SCAP-SREBP complex (composed of SCAP and SREBF1/SREBP1 or SREBF2/SREBP2); association is mediated via its interaction with SCAP and only takes place in the presence of sterols. Interacts with RNF139. Interacts with RNF145. Post-translationally, phosphorylation at Ser-151 by PCK1 reduces binding to oxysterol, disrupting the interaction between INSIG2 and SCAP, thereby promoting nuclear translocation of SREBP proteins (SREBF1/SREBP1 or SREBF2/SREBP2) and subsequent transcription of downstream lipogenesis-related genes. In terms of processing, polyubiquitinated by AMFR/gp78 at Cys-215 in some tissues such as adipose tissues, undifferentiated myoblasts and liver, leading to its degradation. In differentiated myotubes, Cys-215 oxidation prevents ubiquitination at the same site, resulting in protein stabilization. Oxidized at Cys-215 in differentiated myotubes, preventing ubiquitination at the same site, and resulting in protein stabilization. In terms of tissue distribution, expressed in liver, testis, kidney, spleen, intestine, brain and adrenal gland.

The protein resides in the endoplasmic reticulum membrane. Functionally, oxysterol-binding protein that mediates feedback control of cholesterol synthesis by controlling both endoplasmic reticulum to Golgi transport of SCAP and degradation of HMGCR. Acts as a negative regulator of cholesterol biosynthesis by mediating the retention of the SCAP-SREBP complex in the endoplasmic reticulum, thereby blocking the processing of sterol regulatory element-binding proteins (SREBPs) SREBF1/SREBP1 and SREBF2/SREBP2. Binds oxysterol, including 22-hydroxycholesterol, 24-hydroxycholesterol, 25-hydroxycholesterol and 27-hydroxycholesterol, regulating interaction with SCAP and retention of the SCAP-SREBP complex in the endoplasmic reticulum. In presence of oxysterol, interacts with SCAP, retaining the SCAP-SREBP complex in the endoplasmic reticulum, thereby preventing SCAP from escorting SREBF1/SREBP1 and SREBF2/SREBP2 to the Golgi. Sterol deprivation or phosphorylation by PCK1 reduce oxysterol-binding, disrupting the interaction between INSIG2 and SCAP, thereby promoting Golgi transport of the SCAP-SREBP complex, followed by processing and nuclear translocation of SREBF1/SREBP1 and SREBF2/SREBP2. Also regulates cholesterol synthesis by regulating degradation of HMGCR: initiates the sterol-mediated ubiquitin-mediated endoplasmic reticulum-associated degradation (ERAD) of HMGCR via recruitment of the reductase to the ubiquitin ligase RNF139. The sequence is that of Insulin-induced gene 2 protein from Mus musculus (Mouse).